The following is a 343-amino-acid chain: ELAV-like protein 3 (343 aa).

RRM domains follow at residues 35–113, 121–202, and 260–338; these read TNLI…YARP, ANLY…FANN, and WCIF…FKTS.

The protein belongs to the RRM elav family.

RNA-binding protein that binds to AU-rich sequences (AREs) of target mRNAs. May also bind poly-A tracts via RRM 3. May be involved in neuronal differentiation and maintenance. The protein is ELAV-like protein 3 of Xenopus tropicalis (Western clawed frog).